Consider the following 227-residue polypeptide: Isoprenyl transferase (227 aa).

Asp-13 is an active-site residue. Asp-13 lines the Mg(2+) pocket. Residues 14–17 (GNGR), Trp-18, Arg-26, His-30, and 58–60 (STE) each bind substrate. Asn-61 acts as the Proton acceptor in catalysis. Substrate contacts are provided by residues Trp-62, Arg-64, Arg-175, and 181–183 (RLS). A Mg(2+)-binding site is contributed by Glu-194.

Belongs to the UPP synthase family. In terms of assembly, homodimer. Requires Mg(2+) as cofactor.

In terms of biological role, catalyzes the condensation of isopentenyl diphosphate (IPP) with allylic pyrophosphates generating different type of terpenoids. The polypeptide is Isoprenyl transferase (Treponema denticola (strain ATCC 35405 / DSM 14222 / CIP 103919 / JCM 8153 / KCTC 15104)).